Here is a 300-residue protein sequence, read N- to C-terminus: MANLYDLKKFDLNLLVIFECIYQHLSISKAAESLYITPSAVSQSLQRLRAQFNDPLFIRSGKGIAPTTTGLNLHHHLEKNLRGLEQTINIVNKSELKKNFIIYGPQLISCSNNSMLIRCLRQDSSVEIECHDILMSAENAEELLVHRKADLVITQMPVISRSVICMPLHTIRNTLICSNRHPRITDNSTYEQIMAEEFTQLISKSAGVDDIQMEIDERFMNRKISFRGSSLLTIINSIAVTDLLGIVPYELYNSYRDFLNLKEIKLEHPLPSIKLYISYNKSSLNNLVFSRFIDRLNESF.

The HTH lysR-type domain occupies 10-67 (FDLNLLVIFECIYQHLSISKAAESLYITPSAVSQSLQRLRAQFNDPLFIRSGKGIAPT). The segment at residues 27–46 (ISKAAESLYITPSAVSQSLQ) is a DNA-binding region (H-T-H motif).

Belongs to the LysR transcriptional regulatory family.

This is an uncharacterized protein from Escherichia coli (strain K12).